The chain runs to 393 residues: Pectate lyase A (393 aa).

The first 32 residues, 1–32 (MMNKASGRSFTRSSKYLLATLIAGMMASGVSA), serve as a signal peptide directing secretion. Ca(2+) is bound by residues glutamate 174, aspartate 176, aspartate 216, and aspartate 220. Arginine 273 is a catalytic residue. The cysteines at positions 330 and 358 are disulfide-linked.

The protein belongs to the polysaccharide lyase 1 family. PLADES subfamily. The cofactor is Ca(2+).

The protein localises to the secreted. It carries out the reaction Eliminative cleavage of (1-&gt;4)-alpha-D-galacturonan to give oligosaccharides with 4-deoxy-alpha-D-galact-4-enuronosyl groups at their non-reducing ends.. It functions in the pathway glycan metabolism; pectin degradation; 2-dehydro-3-deoxy-D-gluconate from pectin: step 2/5. In terms of biological role, involved in maceration and soft-rotting of plant tissue. The polypeptide is Pectate lyase A (pelA) (Dickeya chrysanthemi (Pectobacterium chrysanthemi)).